The primary structure comprises 605 residues: F-box/WD repeat-containing protein pof1 (605 aa).

The F-box domain maps to 107 to 153; it reads LDFLSLLPVEISFRILSFLDARSLCQAAQVSKHWKELADDDVIWHRM. The span at 195–212 shows a compositional bias: basic and acidic residues; it reads GVDQAHESSPVKKAKLDD. The disordered stretch occupies residues 195–231; it reads GVDQAHESSPVKKAKLDDYPTSSNEETISSVKPPSPN. The span at 214 to 231 shows a compositional bias: polar residues; the sequence is PTSSNEETISSVKPPSPN. A phosphoserine mark is found at serine 229 and serine 232. 7 WD repeats span residues 271 to 299, 311 to 339, 350 to 379, 390 to 420, 432 to 460, 472 to 500, and 510 to 538; these read GHSD…RLWN, GHSS…RIWN, HGHT…KLWH, GHTG…KIWS, AHIG…KQWD, GHIE…KVWE, and NHSE…YLWL.

As to quaternary structure, a part of the E3 ubiquitin ligase Skp1-Cullin-1-F-box (SCF) complex. Interacts with cul1, skp1 and phosphorylated zip1.

The protein localises to the nucleus. Functionally, probably recognizes and binds to some phosphorylated proteins and promotes their ubiquitination and degradation. Required for the inactivation of zip1 via ubiquitination. This chain is F-box/WD repeat-containing protein pof1 (pof1), found in Schizosaccharomyces pombe (strain 972 / ATCC 24843) (Fission yeast).